The primary structure comprises 488 residues: N-succinylglutamate 5-semialdehyde dehydrogenase (488 aa).

G221–G226 contacts NAD(+). Residues E244 and C278 contribute to the active site.

It belongs to the aldehyde dehydrogenase family. AstD subfamily.

The catalysed reaction is N-succinyl-L-glutamate 5-semialdehyde + NAD(+) + H2O = N-succinyl-L-glutamate + NADH + 2 H(+). It functions in the pathway amino-acid degradation; L-arginine degradation via AST pathway; L-glutamate and succinate from L-arginine: step 4/5. In terms of biological role, catalyzes the NAD-dependent reduction of succinylglutamate semialdehyde into succinylglutamate. This Pseudomonas savastanoi pv. phaseolicola (strain 1448A / Race 6) (Pseudomonas syringae pv. phaseolicola (strain 1448A / Race 6)) protein is N-succinylglutamate 5-semialdehyde dehydrogenase.